We begin with the raw amino-acid sequence, 142 residues long: Hemoglobin subunit alpha (142 aa).

N-acetylserine is present on Ser1. The Globin domain maps to 1–142; the sequence is SLSDKDKAAV…VALALAERYR (142 aa). Position 59 (His59) interacts with O2. His88 provides a ligand contact to heme b.

The protein belongs to the globin family. Heterotetramer of two alpha chains and two beta chains. Red blood cells.

Functionally, involved in oxygen transport from gills to the various peripheral tissues. The sequence is that of Hemoglobin subunit alpha (hba) from Gymnodraco acuticeps (Antarctic dragonfish).